Here is a 282-residue protein sequence, read N- to C-terminus: Pantothenate synthetase (282 aa).

ATP is bound at residue 30–37 (MGNLHDGH). Histidine 37 acts as the Proton donor in catalysis. Residue glutamine 61 coordinates (R)-pantoate. Glutamine 61 serves as a coordination point for beta-alanine. 149–152 (GEKD) provides a ligand contact to ATP. Glutamine 155 is a (R)-pantoate binding site. 186–189 (MSSR) provides a ligand contact to ATP.

It belongs to the pantothenate synthetase family. As to quaternary structure, homodimer.

It localises to the cytoplasm. It carries out the reaction (R)-pantoate + beta-alanine + ATP = (R)-pantothenate + AMP + diphosphate + H(+). Its pathway is cofactor biosynthesis; (R)-pantothenate biosynthesis; (R)-pantothenate from (R)-pantoate and beta-alanine: step 1/1. Its function is as follows. Catalyzes the condensation of pantoate with beta-alanine in an ATP-dependent reaction via a pantoyl-adenylate intermediate. In Alteromonas mediterranea (strain DSM 17117 / CIP 110805 / LMG 28347 / Deep ecotype), this protein is Pantothenate synthetase.